We begin with the raw amino-acid sequence, 155 residues long: 2-C-methyl-D-erythritol 2,4-cyclodiphosphate synthase (155 aa).

A divalent metal cation contacts are provided by aspartate 8 and histidine 10. 4-CDP-2-C-methyl-D-erythritol 2-phosphate contacts are provided by residues 8 to 10 and 34 to 35; these read DVH and HS. Position 42 (histidine 42) interacts with a divalent metal cation. Residues 56–58, 61–65, 132–135, and arginine 142 contribute to the 4-CDP-2-C-methyl-D-erythritol 2-phosphate site; these read DIG, FPDKD, and TTTE.

The protein belongs to the IspF family. Homotrimer. Requires a divalent metal cation as cofactor.

The enzyme catalyses 4-CDP-2-C-methyl-D-erythritol 2-phosphate = 2-C-methyl-D-erythritol 2,4-cyclic diphosphate + CMP. The protein operates within isoprenoid biosynthesis; isopentenyl diphosphate biosynthesis via DXP pathway; isopentenyl diphosphate from 1-deoxy-D-xylulose 5-phosphate: step 4/6. Functionally, involved in the biosynthesis of isopentenyl diphosphate (IPP) and dimethylallyl diphosphate (DMAPP), two major building blocks of isoprenoid compounds. Catalyzes the conversion of 4-diphosphocytidyl-2-C-methyl-D-erythritol 2-phosphate (CDP-ME2P) to 2-C-methyl-D-erythritol 2,4-cyclodiphosphate (ME-CPP) with a corresponding release of cytidine 5-monophosphate (CMP). This chain is 2-C-methyl-D-erythritol 2,4-cyclodiphosphate synthase, found in Desulfatibacillum aliphaticivorans.